The chain runs to 256 residues: 5-keto-4-deoxy-D-glucarate aldolase (256 aa).

Catalysis depends on H50, which acts as the Proton acceptor. Position 151 (Q151) interacts with substrate. A Mg(2+)-binding site is contributed by E153. Residues S178 and D179 each coordinate substrate. Mg(2+) is bound at residue D179.

The protein belongs to the HpcH/HpaI aldolase family. KDGluc aldolase subfamily. In terms of assembly, homohexamer; trimer of dimers. Mg(2+) serves as cofactor.

The enzyme catalyses 5-dehydro-4-deoxy-D-glucarate = 2-hydroxy-3-oxopropanoate + pyruvate. It catalyses the reaction 2-dehydro-3-deoxy-D-glucarate = 2-hydroxy-3-oxopropanoate + pyruvate. It functions in the pathway carbohydrate acid metabolism; galactarate degradation; D-glycerate from galactarate: step 2/3. Its function is as follows. Catalyzes the reversible retro-aldol cleavage of both 5-keto-4-deoxy-D-glucarate and 2-keto-3-deoxy-D-glucarate to pyruvate and tartronic semialdehyde. In Escherichia coli O157:H7 (strain EC4115 / EHEC), this protein is 5-keto-4-deoxy-D-glucarate aldolase.